We begin with the raw amino-acid sequence, 430 residues long: Adenylosuccinate synthetase (430 aa).

Residues 12-18 (GDEGKGK) and 40-42 (GHT) contribute to the GTP site. The active-site Proton acceptor is the Asp13. Mg(2+) contacts are provided by Asp13 and Gly40. IMP contacts are provided by residues 13-16 (DEGK), 38-41 (NAGH), Thr130, Arg144, Gln224, Thr239, and Arg303. Residue His41 is the Proton donor of the active site. 299-305 (VVTGRKR) contributes to the substrate binding site. GTP is bound by residues Arg305, 331–333 (KLD), and 413–415 (STS).

It belongs to the adenylosuccinate synthetase family. Homodimer. Mg(2+) serves as cofactor.

It localises to the cytoplasm. It carries out the reaction IMP + L-aspartate + GTP = N(6)-(1,2-dicarboxyethyl)-AMP + GDP + phosphate + 2 H(+). The protein operates within purine metabolism; AMP biosynthesis via de novo pathway; AMP from IMP: step 1/2. Plays an important role in the de novo pathway of purine nucleotide biosynthesis. Catalyzes the first committed step in the biosynthesis of AMP from IMP. The chain is Adenylosuccinate synthetase from Methylobacterium sp. (strain 4-46).